A 202-amino-acid chain; its full sequence is Inner membrane-spanning protein YciB (202 aa).

5 helical membrane passes run 47–67 (ILLATVVVIAATVAQIIWVHF), 75–95 (MLWVSLVLVVVFGGLTLAFQN), 101–121 (WKPTILYWVFAGSMIFSAFIL), 146–166 (LSWIGFFLFMGALNLFVAFNF), and 174–194 (FKLFGGMGLMLVFVLGQGMLL).

The protein belongs to the YciB family.

The protein localises to the cell inner membrane. Its function is as follows. Plays a role in cell envelope biogenesis, maintenance of cell envelope integrity and membrane homeostasis. This chain is Inner membrane-spanning protein YciB, found in Dechloromonas aromatica (strain RCB).